The sequence spans 556 residues: Formate--tetrahydrofolate ligase (556 aa).

65–72 is a binding site for ATP; the sequence is TPAGEGKT.

Belongs to the formate--tetrahydrofolate ligase family.

The enzyme catalyses (6S)-5,6,7,8-tetrahydrofolate + formate + ATP = (6R)-10-formyltetrahydrofolate + ADP + phosphate. It functions in the pathway one-carbon metabolism; tetrahydrofolate interconversion. The protein is Formate--tetrahydrofolate ligase of Peptoclostridium acidaminophilum (Eubacterium acidaminophilum).